Reading from the N-terminus, the 106-residue chain is Nucleoid-associated protein RPA0616 (106 aa).

Belongs to the YbaB/EbfC family. Homodimer.

The protein resides in the cytoplasm. The protein localises to the nucleoid. Functionally, binds to DNA and alters its conformation. May be involved in regulation of gene expression, nucleoid organization and DNA protection. This is Nucleoid-associated protein RPA0616 from Rhodopseudomonas palustris (strain ATCC BAA-98 / CGA009).